A 564-amino-acid polypeptide reads, in one-letter code: Potassium-transporting ATPase potassium-binding subunit (564 aa).

10 consecutive transmembrane segments (helical) span residues 4 to 24 (YDFA…PWLG), 67 to 87 (TLAL…VLLL), 135 to 155 (LGLT…LVVL), 179 to 199 (LYGL…QGVP), 258 to 278 (FEVA…GHYV), 286 to 306 (AILA…LWSE), 382 to 402 (AGLY…GLMI), 420 to 440 (LLVA…AIAA), 487 to 507 (LMIG…ILAL), and 533 to 553 (GLLL…TLAL).

It belongs to the KdpA family. The system is composed of three essential subunits: KdpA, KdpB and KdpC.

It localises to the cell inner membrane. Functionally, part of the high-affinity ATP-driven potassium transport (or Kdp) system, which catalyzes the hydrolysis of ATP coupled with the electrogenic transport of potassium into the cytoplasm. This subunit binds the periplasmic potassium ions and delivers the ions to the membrane domain of KdpB through an intramembrane tunnel. The polypeptide is Potassium-transporting ATPase potassium-binding subunit (Pseudomonas putida (strain ATCC 47054 / DSM 6125 / CFBP 8728 / NCIMB 11950 / KT2440)).